Here is a 224-residue protein sequence, read N- to C-terminus: BTB/POZ domain-containing protein At5g48510 (224 aa).

The BTB domain occupies 24–98 (VDVMLKAKNS…ICSDGSMLSA (75 aa)).

Interacts with CUL3A.

The protein operates within protein modification; protein ubiquitination. Its function is as follows. May act as a substrate-specific adapter of an E3 ubiquitin-protein ligase complex (CUL3-RBX1-BTB) which mediates the ubiquitination and subsequent proteasomal degradation of target proteins. This is BTB/POZ domain-containing protein At5g48510 from Arabidopsis thaliana (Mouse-ear cress).